The primary structure comprises 74 residues: Brevinin-2CG1 (74 aa).

The signal sequence occupies residues 1–22 (MFTMKKSMLVLFFLGTISLSLC). A propeptide spans 23–39 (EEERNADEDDGEMTEEV) (removed in mature form). An intrachain disulfide couples C68 to C74.

Expressed by the skin glands.

It is found in the secreted. Its function is as follows. Antimicrobial peptide active against a variety of Gram-positive and some Gram-negative bacterial strains. Has antifungal activity against a slime mold isolate. Has hemolytic activity against human erythrocytes. The chain is Brevinin-2CG1 from Amolops chunganensis (Chungan torrent frog).